The following is a 57-amino-acid chain: UPF0391 membrane protein IL0696 (57 aa).

Helical transmembrane passes span 4-24 (WVLI…GGIA) and 28-48 (AGIA…SLVV).

The protein belongs to the UPF0391 family.

It is found in the cell membrane. The chain is UPF0391 membrane protein IL0696 from Idiomarina loihiensis (strain ATCC BAA-735 / DSM 15497 / L2-TR).